Here is a 299-residue protein sequence, read N- to C-terminus: MRIIVLGSAAGGGHPQWNCHTPASQRAWQQADGAQRRTQASIAVSADGQRWVLINASPDFRQQILATPALWPQHGLRHSPIESVLLTSGEIDHIAGLLSMRESQRFSLHASSRVLDLLAQNPIFDALNPQYVDRHPFALNTPLTLCDLQLTPFSVPGKVPLFMESRSGGDLAGSNEETLGLTIDDGRHRVHYIPGCAAMTDDLRARLHGAELVFFDGTLWRDDEMVQLGVSQKTGQRMGHMSIDGTDGTLAAFAQLQVARKVLIHINTTNPVLDAHSPEHAAVRAAGWDVAHDGLEISL.

The protein belongs to the PqqB family.

It functions in the pathway cofactor biosynthesis; pyrroloquinoline quinone biosynthesis. Functionally, may be involved in the transport of PQQ or its precursor to the periplasm. This chain is Coenzyme PQQ synthesis protein B, found in Xanthomonas campestris pv. campestris (strain 8004).